The chain runs to 215 residues: 3-demethoxyubiquinol 3-hydroxylase (215 aa).

The segment at 26–47 (PSSAHSQRPSPAVVQPEHKMSE) is disordered. Positions 64, 94, 97, 146, 178, and 181 each coordinate Fe cation.

It belongs to the COQ7 family. The cofactor is Fe cation.

It is found in the cell membrane. The enzyme catalyses a 5-methoxy-2-methyl-3-(all-trans-polyprenyl)benzene-1,4-diol + AH2 + O2 = a 3-demethylubiquinol + A + H2O. It participates in cofactor biosynthesis; ubiquinone biosynthesis. Functionally, catalyzes the hydroxylation of 2-nonaprenyl-3-methyl-6-methoxy-1,4-benzoquinol during ubiquinone biosynthesis. The polypeptide is 3-demethoxyubiquinol 3-hydroxylase (Pseudomonas syringae pv. syringae (strain B728a)).